A 91-amino-acid polypeptide reads, in one-letter code: DNA-directed RNA polymerase subunit Rpo5 (91 aa).

Belongs to the archaeal Rpo5/eukaryotic RPB5 RNA polymerase subunit family. As to quaternary structure, part of the RNA polymerase complex.

It localises to the cytoplasm. The enzyme catalyses RNA(n) + a ribonucleoside 5'-triphosphate = RNA(n+1) + diphosphate. Functionally, DNA-dependent RNA polymerase (RNAP) catalyzes the transcription of DNA into RNA using the four ribonucleoside triphosphates as substrates. The polypeptide is DNA-directed RNA polymerase subunit Rpo5 (Staphylothermus marinus (strain ATCC 43588 / DSM 3639 / JCM 9404 / F1)).